The primary structure comprises 473 residues: 3-isopropylmalate dehydratase large subunit (473 aa).

[4Fe-4S] cluster-binding residues include cysteine 351, cysteine 414, and cysteine 417.

The protein belongs to the aconitase/IPM isomerase family. LeuC type 1 subfamily. In terms of assembly, heterodimer of LeuC and LeuD. Requires [4Fe-4S] cluster as cofactor.

It catalyses the reaction (2R,3S)-3-isopropylmalate = (2S)-2-isopropylmalate. Its pathway is amino-acid biosynthesis; L-leucine biosynthesis; L-leucine from 3-methyl-2-oxobutanoate: step 2/4. Its function is as follows. Catalyzes the isomerization between 2-isopropylmalate and 3-isopropylmalate, via the formation of 2-isopropylmaleate. The chain is 3-isopropylmalate dehydratase large subunit from Acidovorax ebreus (strain TPSY) (Diaphorobacter sp. (strain TPSY)).